The chain runs to 118 residues: MTNESEVGVKKAAELLRQGATMLEEACPICKMPLFKLKNGDVVCPVHGKVYIVKSDDEEKIVKRNLQLDEIESILIDGLYLSAKKMKEDPLDSERIIQIIRYLDALERLRKIKINSSE.

It belongs to the UPF0148 family.

The protein is UPF0148 protein LS215_1455 of Saccharolobus islandicus (strain L.S.2.15 / Lassen #1) (Sulfolobus islandicus).